The following is a 494-amino-acid chain: Glutamyl-tRNA(Gln) amidotransferase subunit A (494 aa).

Residues Lys-81 and Ser-156 each act as charge relay system in the active site. Ser-180 acts as the Acyl-ester intermediate in catalysis.

The protein belongs to the amidase family. GatA subfamily. As to quaternary structure, heterotrimer of A, B and C subunits.

It carries out the reaction L-glutamyl-tRNA(Gln) + L-glutamine + ATP + H2O = L-glutaminyl-tRNA(Gln) + L-glutamate + ADP + phosphate + H(+). Allows the formation of correctly charged Gln-tRNA(Gln) through the transamidation of misacylated Glu-tRNA(Gln) in organisms which lack glutaminyl-tRNA synthetase. The reaction takes place in the presence of glutamine and ATP through an activated gamma-phospho-Glu-tRNA(Gln). The chain is Glutamyl-tRNA(Gln) amidotransferase subunit A from Mycobacterium bovis (strain ATCC BAA-935 / AF2122/97).